We begin with the raw amino-acid sequence, 210 residues long: Glycerol-3-phosphate acyltransferase (210 aa).

6 helical membrane passes run 8–28, 56–76, 87–107, 119–139, 144–164, and 165–185; these read LILL…LLLT, GLAA…VLIA, TMAV…WLGF, TIWV…LLVA, ISSA…VLLS, and GRPL…LIWA.

It belongs to the PlsY family. Probably interacts with PlsX.

The protein resides in the cell inner membrane. The enzyme catalyses an acyl phosphate + sn-glycerol 3-phosphate = a 1-acyl-sn-glycero-3-phosphate + phosphate. It functions in the pathway lipid metabolism; phospholipid metabolism. Catalyzes the transfer of an acyl group from acyl-phosphate (acyl-PO(4)) to glycerol-3-phosphate (G3P) to form lysophosphatidic acid (LPA). This enzyme utilizes acyl-phosphate as fatty acyl donor, but not acyl-CoA or acyl-ACP. This is Glycerol-3-phosphate acyltransferase from Gluconobacter oxydans (strain 621H) (Gluconobacter suboxydans).